The following is a 464-amino-acid chain: ATP synthase subunit beta (464 aa).

148–155 lines the ATP pocket; the sequence is GGAGVGKT.

The protein belongs to the ATPase alpha/beta chains family. As to quaternary structure, F-type ATPases have 2 components, CF(1) - the catalytic core - and CF(0) - the membrane proton channel. CF(1) has five subunits: alpha(3), beta(3), gamma(1), delta(1), epsilon(1). CF(0) has three main subunits: a(1), b(2) and c(9-12). The alpha and beta chains form an alternating ring which encloses part of the gamma chain. CF(1) is attached to CF(0) by a central stalk formed by the gamma and epsilon chains, while a peripheral stalk is formed by the delta and b chains.

The protein localises to the cell inner membrane. It catalyses the reaction ATP + H2O + 4 H(+)(in) = ADP + phosphate + 5 H(+)(out). In terms of biological role, produces ATP from ADP in the presence of a proton gradient across the membrane. The catalytic sites are hosted primarily by the beta subunits. This Acinetobacter baumannii (strain AB0057) protein is ATP synthase subunit beta.